The primary structure comprises 136 residues: Nucleoside diphosphate kinase (136 aa).

ATP-binding residues include lysine 10, phenylalanine 58, arginine 86, threonine 92, arginine 104, and asparagine 114. Histidine 117 (pros-phosphohistidine intermediate) is an active-site residue.

Belongs to the NDK family. Homotetramer. Requires Mg(2+) as cofactor.

It is found in the cytoplasm. It catalyses the reaction a 2'-deoxyribonucleoside 5'-diphosphate + ATP = a 2'-deoxyribonucleoside 5'-triphosphate + ADP. The enzyme catalyses a ribonucleoside 5'-diphosphate + ATP = a ribonucleoside 5'-triphosphate + ADP. Functionally, major role in the synthesis of nucleoside triphosphates other than ATP. The ATP gamma phosphate is transferred to the NDP beta phosphate via a ping-pong mechanism, using a phosphorylated active-site intermediate. This Saccharopolyspora erythraea (strain ATCC 11635 / DSM 40517 / JCM 4748 / NBRC 13426 / NCIMB 8594 / NRRL 2338) protein is Nucleoside diphosphate kinase.